Reading from the N-terminus, the 373-residue chain is Diels-Alderase (373 aa).

This sequence belongs to the Diels-Alderase family.

It carries out the reaction (5S)-3-[(2E,6R,8E,10E,12E)-2,6-dimethyltetradeca-2,8,10,12-tetraenoyl]-5-(hydroxymethyl)pyrrolidine-2,4-dione = trichosetin. The protein operates within mycotoxin biosynthesis. In terms of biological role, hybrid PKS-NRPS synthetase; part of the gene cluster that mediates the biosynthesis of trichosetin, a trans-fused decalin-containing tetramic acid with antimicrobial activity. The PKS module of PKS-NRPS1 together with the enoylreductase (ER) catalyze the formation of the polyketide unit which is then conjugated to L-serine by the condensation domain of the PKS-NRPS1 NRPS module. Activity of the Dieckmann cyclase domain (RED) results in release of the Dieckmann product intermediate. Diels-Alderase (DA) is involved in endo-selective Diels-Alder cycloaddition to form the decalin ring, leading to the production of N-desmethylequisetin also called trichosetin. The cluster does not contain the equisetin N-methyltransferase and consequently, trichosetin is isolated as final product. This is Diels-Alderase from Gibberella fujikuroi (strain CBS 195.34 / IMI 58289 / NRRL A-6831) (Bakanae and foot rot disease fungus).